Here is a 261-residue protein sequence, read N- to C-terminus: Small ribosomal subunit protein uS2 (261 aa).

It belongs to the universal ribosomal protein uS2 family.

The protein is Small ribosomal subunit protein uS2 of Thermodesulfovibrio yellowstonii (strain ATCC 51303 / DSM 11347 / YP87).